Consider the following 367-residue polypeptide: Probable peptidoglycan glycosyltransferase FtsW (367 aa).

At 1–8 (MRRVEGYD) the chain is on the cytoplasmic side. Residues 9-29 (MIVLMMAVILTCFGVVMVYSA) traverse the membrane as a helical segment. Topologically, residues 30–49 (SSVMAAKKFHDGFFFLKRQS) are periplasmic. The helical transmembrane segment at 50 to 70 (LYALIGFIGMGVAMHVDYHVW) threads the bilayer. The Cytoplasmic segment spans residues 71 to 72 (KK). Residues 73–93 (WAVPLFLGTFFLLLLVFVPGI) traverse the membrane as a helical segment. Over 94-138 (GGTAKGASRWIRLPGFNFQPSELAKVALIMYMAYSLEKRQDKLKQ) the chain is Periplasmic. The helical transmembrane segment at 139–159 (FMSGFFPYMLILGVFIAVLLA) threads the bilayer. The Cytoplasmic portion of the chain corresponds to 160-161 (QH). Residues 162-182 (DMGAALTMLAVAIVMLFAAGT) form a helical membrane-spanning segment. Position 183 (Lys-183) is a topological domain, periplasmic. The helical transmembrane segment at 184–204 (VQYILGMGLVALPGICYLVFT) threads the bilayer. Topologically, residues 205–225 (KAYRMRRITAFLDPWQDPTDA) are cytoplasmic. The chain crosses the membrane as a helical span at residues 226–246 (GFQIIQSWLALGTGGFFGQGL). Topologically, residues 247 to 266 (GEGKQKLFYLPEAHTDFILS) are periplasmic. A helical membrane pass occupies residues 267–287 (VLGEEMGFIGVVVIASMFLLL). Over 288–304 (VQRSIRVAIAAEDSFGR) the chain is Cytoplasmic. The chain crosses the membrane as a helical span at residues 305 to 325 (FLAFGIAILLGLEAFVNMAVV). The Periplasmic portion of the chain corresponds to 326–335 (TGLLPTKGIA). Residues 336 to 356 (LPFLSYGGSSLIISLCSVGVL) form a helical membrane-spanning segment. Residues 357 to 367 (LNVSTRMRGAA) lie on the Cytoplasmic side of the membrane.

Belongs to the SEDS family. FtsW subfamily.

The protein resides in the cell inner membrane. It carries out the reaction [GlcNAc-(1-&gt;4)-Mur2Ac(oyl-L-Ala-gamma-D-Glu-L-Lys-D-Ala-D-Ala)](n)-di-trans,octa-cis-undecaprenyl diphosphate + beta-D-GlcNAc-(1-&gt;4)-Mur2Ac(oyl-L-Ala-gamma-D-Glu-L-Lys-D-Ala-D-Ala)-di-trans,octa-cis-undecaprenyl diphosphate = [GlcNAc-(1-&gt;4)-Mur2Ac(oyl-L-Ala-gamma-D-Glu-L-Lys-D-Ala-D-Ala)](n+1)-di-trans,octa-cis-undecaprenyl diphosphate + di-trans,octa-cis-undecaprenyl diphosphate + H(+). It functions in the pathway cell wall biogenesis; peptidoglycan biosynthesis. Its function is as follows. Peptidoglycan polymerase that is essential for cell division. This Geobacter sp. (strain M18) protein is Probable peptidoglycan glycosyltransferase FtsW.